The sequence spans 509 residues: Maturase K (509 aa).

This sequence belongs to the intron maturase 2 family. MatK subfamily.

Its subcellular location is the plastid. The protein localises to the chloroplast. Its function is as follows. Usually encoded in the trnK tRNA gene intron. Probably assists in splicing its own and other chloroplast group II introns. The chain is Maturase K from Clematis ligusticifolia (Western white clematis).